The chain runs to 187 residues: MTDTLDLDRAVAALTQGGVIAYPTEAVWGLGCDPRQRAAVMRLLEIKRRPVEKGVIVVASSVDVLRDWVDIDALEPARRRDVLTSWPGPHTWILPITDRAPRWVTGEHDGLAVRISAHPVVAALCGAWGAPLVSTSANLAGEPPARSRAALDPALLATIDGVVDGETGALAQPTQIRDARSGQILRD.

Positions 4 to 187 (TLDLDRAVAA…DARSGQILRD (184 aa)) constitute a YrdC-like domain.

The protein belongs to the SUA5 family. TsaC subfamily.

It localises to the cytoplasm. It carries out the reaction L-threonine + hydrogencarbonate + ATP = L-threonylcarbamoyladenylate + diphosphate + H2O. In terms of biological role, required for the formation of a threonylcarbamoyl group on adenosine at position 37 (t(6)A37) in tRNAs that read codons beginning with adenine. Catalyzes the conversion of L-threonine, HCO(3)(-)/CO(2) and ATP to give threonylcarbamoyl-AMP (TC-AMP) as the acyladenylate intermediate, with the release of diphosphate. This Xanthomonas axonopodis pv. citri (strain 306) protein is Threonylcarbamoyl-AMP synthase.